A 475-amino-acid polypeptide reads, in one-letter code: MNLETIIGLEVHVELKTNSKIFSASPTEFGAEPNTQTSVIDLGYPGVLPTLNKEAVNFAMKAAMALNCDIATETKFDRKNYFYPDNPKAYQISQFDKPIGENGWIEIEVDGKKKRIGITRLHLEEDAGKSTHTADGSLVDYNRQGMPLIEIVSEPDMRTPEEAYAYLEKLKSIIQYTGVSDCKMEEGSLRCDANISLRPVGQEKFGTKAELKNLNSFTYVQKGLEHEQVRQEKELLSGGIIQQETRRYDEATKKTILMRVKEGSDDYRYFPEPDLVELYIDDEWKEAVRASIPELPDARKARYVAELGLPAYDAHVLTLTKEMSDFFEATVADGADAKLTSNWLMGEVLAYLNKQQKELKDVALTPAGLSKMVQLIEKGTISSKIAKKVFNELIEKGGDPEEIVKAKGLVQISDEGTLRKVVTEILDNNEQSIEDFKNGKDRAIGFLVGQIMKATKGQANPPLVNKILLEEINKR.

It belongs to the GatB/GatE family. GatB subfamily. In terms of assembly, heterotrimer of A, B and C subunits.

It carries out the reaction L-glutamyl-tRNA(Gln) + L-glutamine + ATP + H2O = L-glutaminyl-tRNA(Gln) + L-glutamate + ADP + phosphate + H(+). The catalysed reaction is L-aspartyl-tRNA(Asn) + L-glutamine + ATP + H2O = L-asparaginyl-tRNA(Asn) + L-glutamate + ADP + phosphate + 2 H(+). Allows the formation of correctly charged Asn-tRNA(Asn) or Gln-tRNA(Gln) through the transamidation of misacylated Asp-tRNA(Asn) or Glu-tRNA(Gln) in organisms which lack either or both of asparaginyl-tRNA or glutaminyl-tRNA synthetases. The reaction takes place in the presence of glutamine and ATP through an activated phospho-Asp-tRNA(Asn) or phospho-Glu-tRNA(Gln). In Bacillus cereus (strain B4264), this protein is Aspartyl/glutamyl-tRNA(Asn/Gln) amidotransferase subunit B.